We begin with the raw amino-acid sequence, 103 residues long: MYAVLATGGKQYRVQEGDVIYVEKLDAEVDSTVELTEVLAVANGEGIKVGAPVVEGAKVTAKVLAQGKQKKVIVFKYKAKKDYRRKNGHRQPYTKLVIEKIEA.

The protein belongs to the bacterial ribosomal protein bL21 family. In terms of assembly, part of the 50S ribosomal subunit. Contacts protein L20.

Its function is as follows. This protein binds to 23S rRNA in the presence of protein L20. This is Large ribosomal subunit protein bL21 from Clostridium botulinum (strain Alaska E43 / Type E3).